Reading from the N-terminus, the 1220-residue chain is Formin-F (1220 aa).

Residues 1-10 (MNRIFGRKKK) show a composition bias toward basic residues. The tract at residues 1–62 (MNRIFGRKKK…TNSKSADKFD (62 aa)) is disordered. Positions 6-373 (GRKKKDKDSD…QISVNKPMIG (368 aa)) constitute a GBD/FH3 domain. Positions 11–20 (DKDSDEKGST) are enriched in basic and acidic residues. Residues 41–56 (AYSSLQPDGNNSTNSK) are compositionally biased toward polar residues. Residues 392–428 (VALQSEFQKNIEELAKVKDQLKKANFDLNIANQELSS) adopt a coiled-coil conformation. Disordered regions lie at residues 461-659 (IDSN…KFTV), 711-732 (SQKK…GTVS), and 1049-1192 (DEAK…KKDI). Low complexity-rich tracts occupy residues 501–518 (SKPP…SSSQ) and 525–554 (SNLS…PQQQ). One can recognise an FH1 domain in the interval 532 to 655 (SDSLSNDFKS…NSNKPPANAP (124 aa)). A compositionally biased stretch (polar residues) spans 555–564 (NIESTLTPEP). A compositionally biased stretch (pro residues) spans 575 to 638 (TTPPPAPPAP…GKGGPPPPPG (64 aa)). The FH2 domain occupies 656-1054 (KFTVSKPTTK…AIKRDEAKAK (399 aa)). A compositionally biased stretch (basic and acidic residues) spans 711 to 722 (SQKKLEASDKKS). A coiled-coil region spans residues 1032 to 1062 (YKDFQRDKEAAERAIKRDEAKAKKAQQLKRM). Polar residues predominate over residues 1066-1083 (IASSTNNKNPLASSSTSV). Residues 1083–1158 (VGDGGMVEDI…TPSKSGSRRE (76 aa)) form the DAD domain. The span at 1117 to 1142 (DSSSITTISEQSENSNTSSITITTPS) shows a compositional bias: low complexity. Residues 1161-1192 (TSKSSDKDKEKEKEKEKQCESTESEDINKKDI) show a composition bias toward basic and acidic residues.

Belongs to the formin homology family. Diaphanous subfamily. In terms of assembly, interacts (via GBD/FH3 domain) with activated Rho-GTPases.

Formins play an important role in the nucleation of actin and the formation of linear actin filaments. The polypeptide is Formin-F (forF) (Dictyostelium discoideum (Social amoeba)).